Here is a 726-residue protein sequence, read N- to C-terminus: Dipeptidyl-peptidase 5 (726 aa).

The N-terminal stretch at 1 to 19 is a signal peptide; it reads MAAAKWLIASLAFASSGLA. N-linked (GlcNAc...) asparagine glycosylation is found at Asn96 and Asn252. The interval 269-291 is disordered; the sequence is AEPINKRNGPRTPQGIEGASSSP. The active-site Charge relay system is the Ser558. N-linked (GlcNAc...) asparagine glycans are attached at residues Asn605 and Asn638. Active-site charge relay system residues include Asp641 and His673. Asn699 is a glycosylation site (N-linked (GlcNAc...) asparagine).

The protein belongs to the peptidase S9C family.

The protein localises to the secreted. The chain is Dipeptidyl-peptidase 5 (DPPV) from Trichophyton schoenleinii.